The chain runs to 496 residues: Catalase-A (496 aa).

Active-site residues include His-54 and Asn-128. Heme is bound at residue Tyr-338. Residues 494–496 (SNL) carry the Microbody targeting signal motif.

It belongs to the catalase family. Heme is required as a cofactor.

It localises to the peroxisome matrix. It catalyses the reaction 2 H2O2 = O2 + 2 H2O. Its function is as follows. Catalyzes the degradation of hydrogen peroxide (H(2)O(2)) generated by peroxisomal oxidases to water and oxygen, thereby protecting cells from the toxic effects of hydrogen peroxide. The chain is Catalase-A (catA) from Dictyostelium discoideum (Social amoeba).